Consider the following 925-residue polypeptide: Protein translocase subunit SecA (925 aa).

Residues glutamine 87, 105–109 (GEGKT), and aspartate 531 each bind ATP. Residues 867–909 (AAGADMRFQHSQPESVLHKPEAGEGEEAQPFRRETPKVGRNDP) form a disordered region. Basic and acidic residues predominate over residues 895–906 (QPFRRETPKVGR). 4 residues coordinate Zn(2+): cysteine 910, cysteine 912, cysteine 921, and histidine 922.

The protein belongs to the SecA family. In terms of assembly, monomer and homodimer. Part of the essential Sec protein translocation apparatus which comprises SecA, SecYEG and auxiliary proteins SecDF-YajC and YidC. The cofactor is Zn(2+).

The protein localises to the cell inner membrane. Its subcellular location is the cytoplasm. It catalyses the reaction ATP + H2O + cellular proteinSide 1 = ADP + phosphate + cellular proteinSide 2.. Its function is as follows. Part of the Sec protein translocase complex. Interacts with the SecYEG preprotein conducting channel. Has a central role in coupling the hydrolysis of ATP to the transfer of proteins into and across the cell membrane, serving both as a receptor for the preprotein-SecB complex and as an ATP-driven molecular motor driving the stepwise translocation of polypeptide chains across the membrane. This chain is Protein translocase subunit SecA, found in Thioalkalivibrio sulfidiphilus (strain HL-EbGR7).